We begin with the raw amino-acid sequence, 358 residues long: Protein ocs (358 aa).

The protein belongs to the lysopine/nopaline/octopine/opine/vitopine dehydrogenases family.

The catalysed reaction is D-octopine + NAD(+) + H2O = L-arginine + pyruvate + NADH + H(+). It carries out the reaction D-lysopine + NADP(+) + H2O = L-lysine + pyruvate + NADPH + H(+). Functionally, reductive condensation of pyruvate and arginine, lysine, histidine, or octopine to form octopine, lysopine, histopine, or octopinic acid, respectively. NADPH is the preferred cofactor, but NADH can also be used. The chain is Protein ocs (ocs) from Agrobacterium vitis (Rhizobium vitis).